The sequence spans 371 residues: Aminomethyltransferase (371 aa).

This sequence belongs to the GcvT family. In terms of assembly, the glycine cleavage system is composed of four proteins: P, T, L and H.

It catalyses the reaction N(6)-[(R)-S(8)-aminomethyldihydrolipoyl]-L-lysyl-[protein] + (6S)-5,6,7,8-tetrahydrofolate = N(6)-[(R)-dihydrolipoyl]-L-lysyl-[protein] + (6R)-5,10-methylene-5,6,7,8-tetrahydrofolate + NH4(+). Functionally, the glycine cleavage system catalyzes the degradation of glycine. The chain is Aminomethyltransferase from Oceanobacillus iheyensis (strain DSM 14371 / CIP 107618 / JCM 11309 / KCTC 3954 / HTE831).